The primary structure comprises 316 residues: Putative metal-binding protein TP_0034 (316 aa).

An N-terminal signal peptide occupies residues 1 to 19; sequence MQRCSVVAALAGVVFLAQA. Residues His68, His146, and His210 each coordinate a divalent metal cation.

This sequence belongs to the bacterial solute-binding protein 9 family.

The protein localises to the periplasm. Part of an ATP-binding cassette (ABC) transport system involved in metal import. Binds a metal with high affinity and specificity and delivers it to the membrane permease for translocation into the cytoplasm. The sequence is that of Putative metal-binding protein TP_0034 from Treponema pallidum (strain Nichols).